Consider the following 120-residue polypeptide: QPAFSVVTRPTFYKLLKAGRDIGYDGTYTTSEDEWIANFTTGWSDQLSRRLSTRLPRLYTRNGKIVRICPSLEYLFLEASEPFTSRGITRHVAATTGCVQDLGTDLDFIRPGGAITGLCS.

Residue Y24 is the Proton acceptor; specific for L-alanine of the active site.

It belongs to the alanine racemase family. Homodimer. Pyridoxal 5'-phosphate serves as cofactor.

It catalyses the reaction L-alanine = D-alanine. In terms of biological role, highly specific to D- and L-alanine and does not catalyze the racemization of other amino acids. This Penaeus monodon (Giant tiger prawn) protein is Alanine racemase.